The following is a 451-amino-acid chain: Enolase (451 aa).

Residue Gln163 participates in (2R)-2-phosphoglycerate binding. Glu205 acts as the Proton donor in catalysis. Residues Asp258, Glu308, and Asp335 each coordinate Mg(2+). Positions 360, 389, 390, and 411 each coordinate (2R)-2-phosphoglycerate. Residue Lys360 is the Proton acceptor of the active site.

The protein belongs to the enolase family. It depends on Mg(2+) as a cofactor.

The protein resides in the cytoplasm. Its subcellular location is the secreted. It is found in the cell surface. The catalysed reaction is (2R)-2-phosphoglycerate = phosphoenolpyruvate + H2O. It participates in carbohydrate degradation; glycolysis; pyruvate from D-glyceraldehyde 3-phosphate: step 4/5. Its function is as follows. Catalyzes the reversible conversion of 2-phosphoglycerate (2-PG) into phosphoenolpyruvate (PEP). It is essential for the degradation of carbohydrates via glycolysis. The protein is Enolase of Mycoplasma mycoides subsp. mycoides SC (strain CCUG 32753 / NCTC 10114 / PG1).